The following is a 389-amino-acid chain: Putative sugar efflux transporter DR_1322 (389 aa).

12 helical membrane passes run 10-30, 34-54, 69-89, 96-116, 135-155, 161-181, 211-231, 246-266, 281-301, 308-328, 341-361, and 363-383; these read AVLLLGLATSLAGPFMSLFAV, GMTPLQLGLFLTFNALSAVLV, KPLVLLTLAAGVLAYLALSGV, MATGVLLLAVSSAAFPQVFAF, VLRAVFSFAWVVGPGVGAAVL, SGVFLLAALCYALAGLPLLFI, GWVVAAFTLYGMAMHMGMVMF, VGFLVGLCALLEIPVMLLFVL, LLLFVVHFALIYLAQGMPLLI, AAVLAVMAGLGMTYFQQLMPG, SVVGSMLSGIVAGAWAQVFGY, and PVFLLCAALSLAAWGMMLWAT.

Belongs to the major facilitator superfamily. Set transporter family.

The protein resides in the cell membrane. Its function is as follows. Involved in the efflux of sugars. The physiological role may be the detoxification of non-metabolizable sugar analogs. In Deinococcus radiodurans (strain ATCC 13939 / DSM 20539 / JCM 16871 / CCUG 27074 / LMG 4051 / NBRC 15346 / NCIMB 9279 / VKM B-1422 / R1), this protein is Putative sugar efflux transporter DR_1322.